The chain runs to 419 residues: Circumsporozoite protein (419 aa).

Positions 1–23 are cleaved as a signal peptide; it reads MKNFNLLAVSSILLVDLFRTHWG. The tract at residues 50 to 111 is disordered; sequence AQVRQSASRG…GNAGGNAGGN (62 aa). Over residues 65–95 the composition is skewed to basic and acidic residues; sequence NPKEEDGADKKKKKDEKQVEPKKPRENKLKQ. A required for the binding to heparan sulfate proteoglycans (HSPGs) on the surface of host hepatocytes region spans residues 81-89; it reads KQVEPKKPR. The segment at 92–96 is region I; contains the proteolytic cleavage site; it reads KLKQP. Tandem repeats lie at residues 99 to 102, 103 to 106, 107 to 110, 111 to 114, 115 to 118, 119 to 122, 123 to 126, 127 to 130, 131 to 134, 135 to 138, 139 to 142, 143 to 146, 147 to 150, 151 to 154, 155 to 158, 159 to 162, 163 to 166, 167 to 170, 171 to 174, 175 to 178, 179 to 182, 183 to 186, 187 to 190, 191 to 194, 195 to 198, 199 to 202, 203 to 206, 207 to 210, 211 to 214, 215 to 218, 219 to 222, 223 to 226, 227 to 230, 231 to 234, 235 to 238, 239 to 242, 243 to 246, and 247 to 250. Residues 99–314 form a 54 X 4 AA approximate tandem repeats of N-A-G-G region; that stretch reads NADGNAGGNA…GGNAGANAGN (216 aa). A disordered region spans residues 146–237; it reads GNADGNAGGN…ADGNAGGNAG (92 aa). One copy of the 39; approximate repeat lies at 251–254; that stretch reads TAGG. A run of 13 repeats spans residues 255–258, 259–262, 263–266, 267–270, 271–274, 275–278, 279–282, 283–286, 287–290, 291–294, 295–298, 299–302, and 303–306. One copy of the 53; approximate repeat lies at 307–310; the sequence is NAGA. One copy of the 54; approximate repeat lies at 311–314; the sequence is NAGN. Residues 312-332 are disordered; it reads AGNKKAGDAGAGQGQNNEAAN. The TSP type-1 domain occupies 345–397; that stretch reads KIRSTISTEWSPCSVTCGKGVRMRKKVSAANKKPEELDVNDLETEVCTMDKCA. 2 cysteine pairs are disulfide-bonded: C357–C391 and C361–C396. A glycan (O-linked (Fuc) threonine) is linked at T360. A lipid anchor (GPI-anchor amidated cysteine) is attached at C396. The propeptide at 397 to 419 is removed in mature form; the sequence is AGIFNVVSNSLRLVILLVLALFN.

The protein belongs to the plasmodium circumsporozoite protein family. Post-translationally, during host cell invasion, proteolytically cleaved at the cell membrane in the region I by a papain-like cysteine protease of parasite origin. Cleavage is triggered by the sporozoite contact with highly sulfated heparan sulfate proteoglycans (HSPGs) present on the host hepatocyte cell surface. Cleavage exposes the TSP type-1 (TSR) domain and is required for productive invasion of host hepatocytes but not for adhesion to the host cell membrane. Cleavage is dispensable for sporozoite development in the oocyst, motility and for traversal of host and vector cells. In terms of processing, O-glycosylated; maybe by POFUT2.

The protein resides in the cell membrane. Its subcellular location is the cytoplasm. Essential sporozoite protein. In the mosquito vector, required for sporozoite development in the oocyst, migration through the vector hemolymph and entry into the vector salivary glands. In the vertebrate host, required for sporozoite migration through the host dermis and infection of host hepatocytes. Binds to highly sulfated heparan sulfate proteoglycans (HSPGs) on the surface of host hepatocytes. Its function is as follows. In the vertebrate host, binds to highly sulfated heparan sulfate proteoglycans (HSPGs) on the surface of host hepatocytes and is required for sporozoite invasion of the host hepatocytes. The polypeptide is Circumsporozoite protein (Plasmodium cynomolgi (strain Mulligan/NIH)).